A 341-amino-acid polypeptide reads, in one-letter code: Dihydroorotate dehydrogenase (quinone) (341 aa).

Residues 61-65 (AGLDK) and threonine 85 contribute to the FMN site. Lysine 65 is a substrate binding site. 110–114 (NRMGF) lines the substrate pocket. Positions 138 and 171 each coordinate FMN. Asparagine 171 is a binding site for substrate. Catalysis depends on serine 174, which acts as the Nucleophile. Asparagine 176 lines the substrate pocket. Lysine 216 and threonine 244 together coordinate FMN. 245 to 246 (NT) serves as a coordination point for substrate. FMN is bound by residues glycine 267, glycine 296, and 317-318 (YS).

It belongs to the dihydroorotate dehydrogenase family. Type 2 subfamily. In terms of assembly, monomer. FMN is required as a cofactor.

Its subcellular location is the cell membrane. It catalyses the reaction (S)-dihydroorotate + a quinone = orotate + a quinol. It participates in pyrimidine metabolism; UMP biosynthesis via de novo pathway; orotate from (S)-dihydroorotate (quinone route): step 1/1. Functionally, catalyzes the conversion of dihydroorotate to orotate with quinone as electron acceptor. This is Dihydroorotate dehydrogenase (quinone) from Pseudomonas putida (strain GB-1).